Reading from the N-terminus, the 69-residue chain is Bacteriocin microcin B17 (69 aa).

The propeptide occupies Met-1–Gly-26. Positions Gly-39–Ser-40 form a cross-link, oxazole-4-carboxylic acid (Gly-Ser). Positions Ser-40 to Cys-41 form a cross-link, thiazole-4-carboxylic acid (Ser-Cys). 3 consecutive cross-links (thiazole-4-carboxylic acid (Gly-Cys)) follow at residues Gly-47–Cys-48, Gly-50–Cys-51, and Gly-54–Cys-55. A cross-link (oxazole-4-carboxylic acid (Cys-Ser)) is located at residues Cys-55–Ser-56. 2 consecutive cross-links (oxazole-4-carboxylic acid (Gly-Ser)) follow at residues Gly-61–Ser-62 and Gly-64–Ser-65.

Post-translationally, the processed N-terminus does not resemble a typical secretion signal sequence. In terms of processing, maturation of thiazole and oxazole containing antibiotics involves the enzymatic condensation of a Cys, Ser or Thr with the alpha-carbonyl of the preceding amino acid to form a thioether or ether bond, then dehydration to form a double bond with the alpha-amino nitrogen. Thiazoline or oxazoline rings are dehydrogenated to form thiazole or oxazole rings.

In terms of biological role, this glycine-rich peptide antibiotic inhibits DNA replication in many enteric bacteria, that leads to induction of the SOS repair system, massive DNA degradation and cell death. B17 inhibits type II topoisomerase by trapping an enzyme - DNA cleavable complex. This is Bacteriocin microcin B17 (mcbA) from Escherichia coli.